The chain runs to 377 residues: Oleosin-B4 (377 aa).

Residues 1 to 37 (MRNEIQNETAQTDQTQGSMFSFFNLFPFLLPMFEVIK) are polar. 3 consecutive transmembrane segments (helical) span residues 16 to 36 (QGSM…FEVI), 38 to 58 (MVVA…TLSG), and 69 to 89 (LFII…VLAA). The tract at residues 38–133 (MVVASVASVV…IIPESIKPSN (96 aa)) is hydrophobic. A run of 3 repeats spans residues 115–124 (IPESIKPSNI), 125–134 (IPESIKPSNI), and 135–144 (IPEGIKPSNI). The tract at residues 115 to 144 (IPESIKPSNIIPESIKPSNIIPEGIKPSNI) is 3 X 10 AA tandem repeats of I-P-E-[SG]-I-K-P-S-N-[IV]. Residues 158–377 (KIKAKKEEKS…SSHGSGGKHI (220 aa)) form a disordered region. Composition is skewed to basic and acidic residues over residues 162–185 (KKEE…KGED) and 195–231 (DEDK…EGKH). The 2-1 repeat unit spans residues 196–202 (EDKHGSG). The stretch at 196–202 (EDKHGSG) is one 2.1 repeat. A 3 X 6 AA tandem repeats of E-[SD]-[KT]-H-G-[KS]-G region spans residues 196 to 222 (EDKHGSGAKHGKGESKHGKGESTHGKG). The 2-2; truncated repeat unit spans residues 204–208 (KHGKG). A run of 7 repeats spans residues 209–215 (ESKHGKG), 216–222 (ESTHGKG), 230–247 (KHGS…GSGG), 260–277 (KHES…GSEG), 278–295 (KHGS…GSGG), 296–313 (KHES…GSGG), and 355–359 (SSDGS). The segment at 230–313 (KHGSGGSSMG…MGGGKHGSGG (84 aa)) is 4 X 18 AA tandem repeats of K-H-E-S-G-G-[SA]-[PSA]-M-G-G-G-K-H-G-S-[GE]-G. A compositionally biased stretch (gly residues) spans 232-244 (GSGGSSMGGGKHG). Positions 247-263 (GKHETGGKHGSGGKHES) are enriched in basic and acidic residues. 2 stretches are compositionally biased toward gly residues: residues 280-292 (GSGG…GKHG) and 302-314 (SAMG…SGGK). Residues 350-369 (SSTSESSDGSSDGSSSDGSS) show a composition bias toward low complexity. Positions 355–368 (SSDGSSDGSSSDGS) are 3 X 5 AA tandem repeats of S-S-D-G-S. One copy of the 4-2; truncated repeat lies at 360–363 (SDGS). One copy of the 4-3 repeat lies at 364–368 (SSDGS).

The protein belongs to the oleosin family. In terms of tissue distribution, the full-length protein is found in the tapetal lipid bodies of immature anthers, the proteolytically cleaved C-terminal product is found on the coats of pollen grains. No expression is detected in other flower organs, siliques or seedlings.

Its subcellular location is the lipid droplet. It localises to the membrane. Its function is as follows. Many of the major pollen coat proteins are derived from endoproteolytic cleavage of oleosin-like proteins. The chain is Oleosin-B4 from Brassica napus (Rape).